A 151-amino-acid polypeptide reads, in one-letter code: UPF0336 protein Franean1_6066 (151 aa).

Residues 8–127 (VGRSYTSDVP…NEVLVTSYEF (120 aa)) form the MaoC-like domain.

It belongs to the UPF0336 family.

The protein is UPF0336 protein Franean1_6066 of Parafrankia sp. (strain EAN1pec).